Reading from the N-terminus, the 324-residue chain is Probable 6-phosphogluconolactonase 4, chloroplastic (324 aa).

The transit peptide at 1–61 (MSVSAAVAAA…RAPAMATDCA (61 aa)) directs the protein to the chloroplast. The segment at 20 to 43 (RRRSPPASRVAATSRGRPFSSGPH) is disordered. A compositionally biased stretch (low complexity) spans 24–34 (PPASRVAATSR).

Belongs to the glucosamine/galactosamine-6-phosphate isomerase family. 6-phosphogluconolactonase subfamily.

It localises to the plastid. It is found in the chloroplast. The catalysed reaction is 6-phospho-D-glucono-1,5-lactone + H2O = 6-phospho-D-gluconate + H(+). Its pathway is carbohydrate degradation; pentose phosphate pathway; D-ribulose 5-phosphate from D-glucose 6-phosphate (oxidative stage): step 2/3. Its function is as follows. Hydrolysis of 6-phosphogluconolactone to 6-phosphogluconate. The protein is Probable 6-phosphogluconolactonase 4, chloroplastic of Oryza sativa subsp. indica (Rice).